Reading from the N-terminus, the 151-residue chain is MTTLRLDSLKANVGARRRKMRKGRGIAAGQGASCGFGMRGQKSRSGRPTRPGFEGGQMPLYRRVPKLKHFTTVNSKEFTVVNVAALNELKAGSTINLDTLVKNGVVTSPKYPLKVLGNGELKVKLTIQAAAFTATARSKIEAAGGTCEILD.

The disordered stretch occupies residues 37-57 (GMRGQKSRSGRPTRPGFEGGQ).

It belongs to the universal ribosomal protein uL15 family. As to quaternary structure, part of the 50S ribosomal subunit.

Its function is as follows. Binds to the 23S rRNA. The polypeptide is Large ribosomal subunit protein uL15 (Prochlorococcus marinus (strain MIT 9313)).